The sequence spans 412 residues: Branched-chain alpha-ketoacid dehydrogenase kinase (412 aa).

The transit peptide at 1–30 directs the protein to the mitochondrion; the sequence is MILASVLGSGPRGGPPLRPLLGPALSLRAR. Serine 31 carries the post-translational modification Phosphoserine. Serine 52 carries the phosphoserine; by autocatalysis modification. The 246-residue stretch at 159–404 folds into the Histidine kinase domain; that stretch reads LDDHKDVVTL…DVYLRLRHID (246 aa). N6-acetyllysine is present on residues lysine 192 and lysine 233. Residues asparagine 279 and aspartate 315 each coordinate ATP. Residue asparagine 279 participates in Mg(2+) binding. The K(+) site is built by valine 328, aspartate 330, and phenylalanine 333. ATP is bound by residues threonine 334 and threonine 335. Residues serine 356 and serine 360 each carry the phosphoserine modification. ATP contacts are provided by histidine 364, glycine 367, and leucine 370. Glycine 367 contacts K(+).

The protein belongs to the PDK/BCKDK protein kinase family. Homodimer. Homotetramer. Dimerizes through interaction of two opposing nucleotide-binding domains. Interacts with E2 component of the branched-chain alpha-ketoacid dehydrogenase (BCKDH) complex. Competes with BCKDK for binding to the E2 component; this interaction is modulated by branched-chain alpha-keto acids. At steady state, BCKDH holoenzyme contains BCKDK and BCKDHA is phosphorylated. In response to high levels of branched-chain alpha-keto acids, the inhibitory BCKDK is replaced by activating PPM1K leading to BCKDHA dephosphorylation and BCAA degradation. Post-translationally, autophosphorylated.

It is found in the mitochondrion matrix. The protein resides in the mitochondrion. The enzyme catalyses L-seryl-[3-methyl-2-oxobutanoate dehydrogenase] + ATP = O-phospho-L-seryl-[3-methyl-2-oxobutanoate dehydrogenase] + ADP + H(+). It catalyses the reaction L-seryl-[protein] + ATP = O-phospho-L-seryl-[protein] + ADP + H(+). Serine/threonine-protein kinase component of macronutrients metabolism. Forms a functional kinase and phosphatase pair with PPM1K, serving as a metabolic regulatory node that coordinates branched-chain amino acids (BCAAs) with glucose and lipid metabolism via two distinct phosphoprotein targets: mitochondrial BCKDHA subunit of the branched-chain alpha-ketoacid dehydrogenase (BCKDH) complex and cytosolic ACLY, a lipogenic enzyme of Krebs cycle. Phosphorylates and inactivates mitochondrial BCKDH complex a multisubunit complex consisting of three multimeric components each involved in different steps of BCAA catabolism: E1 composed of BCKDHA and BCKDHB, E2 core composed of DBT monomers, and E3 composed of DLD monomers. Associates with the E2 component of BCKDH complex and phosphorylates BCKDHA on Ser-347, leading to conformational changes that interrupt substrate channeling between E1 and E2 and inactivates the BCKDH complex. Phosphorylates ACLY on Ser-455 in response to changes in cellular carbohydrate abundance such as occurs during fasting to feeding metabolic transition. Refeeding stimulates MLXIPL/ChREBP transcription factor, leading to increased BCKDK to PPM1K expression ratio, phosphorylation and activation of ACLY that ultimately results in the generation of malonyl-CoA and oxaloacetate immediate substrates of de novo lipogenesis and glucogenesis, respectively. Recognizes phosphosites having SxxE/D canonical motif. This Bos taurus (Bovine) protein is Branched-chain alpha-ketoacid dehydrogenase kinase (BCKDK).